The sequence spans 693 residues: F-box protein MAX2 (693 aa).

The F-box domain occupies 3–50; sequence STTLSDLPDVILSTISSLVSDSRARNSLSLVSHKFLALERSTRSHLTI. LRR repeat units lie at residues 9–34, 49–74, 75–100, 110–135, 141–167, 168–196, 200–225, 232–257, 274–299, 302–327, 332–356, 357–382, 383–409, and 410–436; these read LPDV…SLVS, TIRG…DLSF, LSPW…RLKF, VYTR…KLLR, SQIP…DLSN, FYHW…DLLT, TEGY…RVAC, FEFV…HMVD, DSAV…VLDV, DVKH…KLGQ, CSAT…SIKN, SGDL…EIQG, CENV…RISC, and CKNL…HIDC. The segment at 445–465 is disordered; it reads EVEGRVETSEADHEEEDDGYE. 4 LRR repeats span residues 480–505, 508–532, 541–565, and 608–637; these read CSTS…SLWI, GEFL…RIKI, RPAE…QLDC, and DRDV…FIHG.

In terms of assembly, part of a SCF (SKP1-cullin-F-box) protein ligase complex. Interacts with SKP1A/ASK1. Interacts with CUL1. Interacts with SMXL6, SMXL7 and SMXL8. Interacts with D14. Forms a complex with D14 and SKP1A/ASK1 in presence of strigolactone. In terms of tissue distribution, expressed in the vasculature of growing leaves and roots, rosette axillary bud, flowers, siliques, funiculi and stems.

Its subcellular location is the nucleus. It participates in protein modification; protein ubiquitination. Component of SCF(ASK-cullin-F-box) E3 ubiquitin ligase complexes, which may mediate the ubiquitination and subsequent proteasomal degradation of target proteins. Promotes the senescence. Is necessary for responses to strigolactones and karrikins. Contributes to the selective repression of axillary shoots and moderates the branching by regulating negatively the auxin transport in primary stems, in an AXR1-independent manner. Required for the progression of leaf senescence mediated by methyl jasmonate. Required at each node to suppress axillary bud growth. This Arabidopsis thaliana (Mouse-ear cress) protein is F-box protein MAX2.